The primary structure comprises 254 residues: tRNA (guanine-N(1)-)-methyltransferase (254 aa).

S-adenosyl-L-methionine contacts are provided by residues Gly115 and 135–140; that span reads VGDFVL.

It belongs to the RNA methyltransferase TrmD family. In terms of assembly, homodimer.

The protein localises to the cytoplasm. The enzyme catalyses guanosine(37) in tRNA + S-adenosyl-L-methionine = N(1)-methylguanosine(37) in tRNA + S-adenosyl-L-homocysteine + H(+). In terms of biological role, specifically methylates guanosine-37 in various tRNAs. The chain is tRNA (guanine-N(1)-)-methyltransferase from Francisella tularensis subsp. tularensis (strain FSC 198).